Here is a 2073-residue protein sequence, read N- to C-terminus: Histone acetyltransferase KAT6B (2073 aa).

In terms of domain architecture, SAMD1-like winged helix (WH) spans Met-1 to Pro-77. The segment at Lys-72–Gly-97 is disordered. In terms of domain architecture, H15 spans Arg-103–Tyr-176. 2 consecutive PHD-type zinc fingers follow at residues Ile-213 to Cys-272 and Cys-269 to Lys-320. Ser-355 is subject to Phosphoserine. Disordered regions lie at residues Glu-360–Ala-409, Phe-442–Leu-531, Thr-553–Ser-583, and Val-639–Asp-663. Residues Gly-361–Gly-717 form a negatively regulates HAT activity region. Residues Lys-379–Leu-399 are compositionally biased toward polar residues. The segment covering Asp-447 to Lys-460 has biased composition (basic and acidic residues). A compositionally biased stretch (polar residues) spans Gln-470–Gln-485. Pro residues predominate over residues Lys-488–Pro-499. Low complexity predominate over residues Ser-501–Leu-531. At Ser-647 the chain carries Phosphoserine. A Glycyl lysine isopeptide (Lys-Gly) (interchain with G-Cter in SUMO2) cross-link involves residue Lys-673. Positions Asp-715–Pro-989 constitute an MYST-type HAT domain. Residues Arg-718–Ala-1008 form a catalytic region. A C2HC MYST-type zinc finger spans residues Leu-748–Trp-773. The interval Glu-752–Ala-1008 is interaction with BRPF1. N6-acetyllysine; by autocatalysis is present on Lys-815. Acetyl-CoA is bound by residues Ser-856–Ile-860 and Gln-865–Arg-871. Catalysis depends on Glu-891, which acts as the Proton donor/acceptor. An acetyl-CoA-binding site is contributed by Ser-895. 3 disordered regions span residues Glu-1022–Val-1452, Ser-1484–Asp-1538, and Gln-1580–Val-1619. The segment covering Ile-1025–Asn-1043 has biased composition (polar residues). N6-acetyllysine is present on residues Lys-1038, Lys-1042, and Lys-1044. Ser-1048 carries the post-translational modification Phosphoserine. Acidic residues predominate over residues Ser-1069–Asn-1105. Residues Ile-1106–Gln-1117 show a composition bias toward polar residues. The segment covering Ile-1121–Ile-1140 has biased composition (basic residues). Low complexity predominate over residues Ser-1142–Val-1155. Residues Pro-1187–Lys-1200 are compositionally biased toward basic residues. Basic and acidic residues-rich tracts occupy residues Ser-1229–Lys-1243, Arg-1306–Gly-1315, and Glu-1341–Pro-1350. Acidic residues predominate over residues Glu-1351–Gly-1374. Basic and acidic residues-rich tracts occupy residues Val-1378–Lys-1390 and Ser-1396–Asp-1407. A compositionally biased stretch (acidic residues) spans His-1408 to Glu-1417. Over residues His-1433–Val-1452 the composition is skewed to basic and acidic residues. Residues Ala-1498–Pro-1507 are compositionally biased toward acidic residues. The span at Gln-1513–Glu-1529 shows a compositional bias: basic and acidic residues. Residues Gln-1560–Arg-2073 are interaction with RUNX1 and RUNX2. A compositionally biased stretch (polar residues) spans Gln-1580–Cys-1591. Over residues Ser-1594–Val-1611 the composition is skewed to low complexity.

Belongs to the MYST (SAS/MOZ) family. As to quaternary structure, component of the MOZ/MORF complex composed at least of ING5, KAT6A, KAT6B, MEAF6 and one of BRPF1, BRD1/BRPF2 and BRPF3. Interacts with RUNX1 and RUNX2. Post-translationally, autoacetylated. Autoacetylation at Lys-815 is required for proper function. As to expression, ubiquitously expressed, with high levels in heart, pancreas, testis and ovary.

It localises to the nucleus. The catalysed reaction is L-lysyl-[protein] + acetyl-CoA = N(6)-acetyl-L-lysyl-[protein] + CoA + H(+). Functionally, histone acetyltransferase which may be involved in both positive and negative regulation of transcription. Required for RUNX2-dependent transcriptional activation. May be involved in cerebral cortex development. Component of the MOZ/MORF complex which has a histone H3 acetyltransferase activity. In Homo sapiens (Human), this protein is Histone acetyltransferase KAT6B (KAT6B).